Reading from the N-terminus, the 427-residue chain is Putative F-box protein At4g10740 (427 aa).

The 46-residue stretch at arginine 2 to methionine 47 folds into the F-box domain.

This Arabidopsis thaliana (Mouse-ear cress) protein is Putative F-box protein At4g10740.